Consider the following 180-residue polypeptide: ATP synthase subunit delta (180 aa).

Belongs to the ATPase delta chain family. In terms of assembly, F-type ATPases have 2 components, F(1) - the catalytic core - and F(0) - the membrane proton channel. F(1) has five subunits: alpha(3), beta(3), gamma(1), delta(1), epsilon(1). F(0) has three main subunits: a(1), b(2) and c(10-14). The alpha and beta chains form an alternating ring which encloses part of the gamma chain. F(1) is attached to F(0) by a central stalk formed by the gamma and epsilon chains, while a peripheral stalk is formed by the delta and b chains.

It is found in the cell inner membrane. In terms of biological role, f(1)F(0) ATP synthase produces ATP from ADP in the presence of a proton or sodium gradient. F-type ATPases consist of two structural domains, F(1) containing the extramembraneous catalytic core and F(0) containing the membrane proton channel, linked together by a central stalk and a peripheral stalk. During catalysis, ATP synthesis in the catalytic domain of F(1) is coupled via a rotary mechanism of the central stalk subunits to proton translocation. Functionally, this protein is part of the stalk that links CF(0) to CF(1). It either transmits conformational changes from CF(0) to CF(1) or is implicated in proton conduction. The sequence is that of ATP synthase subunit delta from Chlorobium phaeobacteroides (strain BS1).